The following is a 255-amino-acid chain: MVPGRVLMWGALALTAVMSACGGEDIAADHVASYGLNVYQSYGPSGYYTHEFDGDEEFYVDLGKKETVWQLPLFSKFRSFDPQGALRNIATAKHNLNILIKRSNNTAAVNQVPEVTVFPKSPVMLGQPNTLICHVDNIFPPVINITWLKNGHSVTEGFSETSFLSKNDHSFLKISYLTFLPSDDDFYDCKVEHWGLDKPLLKHWEPEIPAPMSELTETVVCALGLIVGLVGIVVGTVFIIQGLRSGGPSRHQGSL.

Residues 1 to 23 form the signal peptide; sequence MVPGRVLMWGALALTAVMSACGG. Residues 24-120 are alpha-1; it reads EDIAADHVAS…QVPEVTVFPK (97 aa). Residues 24-217 are Extracellular-facing; that stretch reads EDIAADHVAS…IPAPMSELTE (194 aa). N-linked (GlcNAc...) asparagine glycosylation is found at asparagine 104 and asparagine 144. In terms of domain architecture, Ig-like C1-type spans 113-205; it reads PEVTVFPKSP…LDKPLLKHWE (93 aa). An alpha-2 region spans residues 121 to 204; it reads SPVMLGQPNT…GLDKPLLKHW (84 aa). Cysteines 133 and 189 form a disulfide. The connecting peptide stretch occupies residues 205–217; the sequence is EPEIPAPMSELTE. Residues 218 to 240 form a helical membrane-spanning segment; sequence TVVCALGLIVGLVGIVVGTVFII. Residues 241-255 are Cytoplasmic-facing; that stretch reads QGLRSGGPSRHQGSL.

Belongs to the MHC class II family.

It is found in the membrane. The chain is SLA class II histocompatibility antigen, DQ haplotype D alpha chain from Sus scrofa (Pig).